The chain runs to 306 residues: Pantothenate kinase (306 aa).

91–98 (GSVAVGKS) is a binding site for ATP.

Belongs to the prokaryotic pantothenate kinase family.

The protein resides in the cytoplasm. The catalysed reaction is (R)-pantothenate + ATP = (R)-4'-phosphopantothenate + ADP + H(+). It participates in cofactor biosynthesis; coenzyme A biosynthesis; CoA from (R)-pantothenate: step 1/5. This Streptococcus suis (strain 05ZYH33) protein is Pantothenate kinase.